Consider the following 426-residue polypeptide: MLGRNFPYFNSVGGFYSRENSRRQPGTGYTSKVRVRDKYHIVGFISSGTYGRVYKAVGRNGQGGEFAIKKFKPDKEGDIIQYTGLSQSAIREMALCSELDHANVVQLAEIILEDKCIFMVFEYTEHDLLQIIHHHTQPQRHPIPAAMVRSILFQLLNGLLYLHTNWVLHRDLKPANILVTSSGAIRIGDLGLARLFYKPLNSLFSGDKVVVTIWYRAPELLMGSRHYTPAVDLWAVGCIFAELLSLRPIFKGEEAKMDSKKTVPFQRNQMMKIIDIMGLPHRDNWPGIVHMPEYSQLQSLAMSRAPNHISRTSNLGSWYQNCLKNGGYSVNSSVGTPGDDGFDLLSRLLDYDPTSRITAKEALEHPYFKNGGPISANCFEGFEGKYPHRRITHDDNDIRSGSLPGTKRSGLPDDSLMSRAAKRMKE.

Positions 39 to 368 (YHIVGFISSG…AKEALEHPYF (330 aa)) constitute a Protein kinase domain. ATP-binding positions include 45 to 53 (ISSGTYGRV) and Lys69. Asp171 functions as the Proton acceptor in the catalytic mechanism. The span at 389 to 398 (RRITHDDNDI) shows a compositional bias: basic and acidic residues. The tract at residues 389-426 (RRITHDDNDIRSGSLPGTKRSGLPDDSLMSRAAKRMKE) is disordered.

The protein belongs to the protein kinase superfamily. CMGC Ser/Thr protein kinase family. CDC2/CDKX subfamily. Component of the srb8-11 complex, a regulatory module of the Mediator complex. The cofactor is Mg(2+).

The protein resides in the nucleus. It catalyses the reaction L-seryl-[protein] + ATP = O-phospho-L-seryl-[protein] + ADP + H(+). It carries out the reaction L-threonyl-[protein] + ATP = O-phospho-L-threonyl-[protein] + ADP + H(+). The catalysed reaction is [DNA-directed RNA polymerase] + ATP = phospho-[DNA-directed RNA polymerase] + ADP + H(+). In terms of biological role, component of the srb8-11 complex. The srb8-11 complex is a regulatory module of the Mediator complex which is itself involved in regulation of basal and activated RNA polymerase II-dependent transcription. The srb8-11 complex may be involved in the transcriptional repression of a subset of genes regulated by Mediator. It may inhibit the association of the Mediator complex with RNA polymerase II to form the holoenzyme complex. The srb8-11 complex phosphorylates the C-terminal domain (CTD) of the largest subunit of RNA polymerase II. In Emericella nidulans (strain FGSC A4 / ATCC 38163 / CBS 112.46 / NRRL 194 / M139) (Aspergillus nidulans), this protein is Serine/threonine-protein kinase ssn3 (ssn3).